The sequence spans 448 residues: MQVSVESTSQIERRVTVQVPAAEVDQAVATRLQETAKNVRLNGFRRGKIPLTVVRQRFGREVRNEVVGEMMRQHYVQAITQESLNPAGSPQVEPTVDEDGKDLEFVATLEVYPEFELNSIENTEIERPQAEVTEADVDQMIETLRTQHAEWEAVDRAAANGDQVTIDFEGYLGDEPFEGGAAEGHELELGSNSFIPGFEEQLVGAKAGDELEIKVTFPEDYQAAHLAGQEATFKVKVHKVAGKQLPEVDDEFIKRFGVEEGGVAAFRADVQKNMEHELSQAVTNRVKQQALEALQQANDIPVPQSLIQQETQGLKRQAAQQFGLGEDFDVSQLPDELFADQAKKRVQVGLLLAEVVKVNELDASDDEIKARVEELAQQYQQPEQVIEYYLKNDEMKNQIKSSVLEDKAVDKLLEQAQVKDVEMSYEQALQAAQQQEGAEEEAQEETSA.

Residues 161 to 246 (GDQVTIDFEG…VHKVAGKQLP (86 aa)) enclose the PPIase FKBP-type domain. A disordered region spans residues 428–448 (ALQAAQQQEGAEEEAQEETSA). The segment covering 437-448 (GAEEEAQEETSA) has biased composition (acidic residues).

This sequence belongs to the FKBP-type PPIase family. Tig subfamily.

It localises to the cytoplasm. The enzyme catalyses [protein]-peptidylproline (omega=180) = [protein]-peptidylproline (omega=0). Functionally, involved in protein export. Acts as a chaperone by maintaining the newly synthesized protein in an open conformation. Functions as a peptidyl-prolyl cis-trans isomerase. This chain is Trigger factor, found in Chromohalobacter salexigens (strain ATCC BAA-138 / DSM 3043 / CIP 106854 / NCIMB 13768 / 1H11).